The sequence spans 128 residues: Cystatin-1 (128 aa).

A signal peptide spans 1–17; that stretch reads MIRSAVVLTVLVGVCLA. Residues 20-128 enclose the Cystatin domain; the sequence is GFVGGWSQVD…TKEVTSFECN (109 aa). 2 disulfides stabilise this stretch: C84-C96 and C107-C127.

It belongs to the cystatin family. In terms of tissue distribution, mainly expressed in gut.

It is found in the secreted. In terms of biological role, inhibitor of cysteine proteinases. Strongly inhibits mammalian cathepsin B and H, and moderately inhibits mammalian cathepsin C. Also inhibits endogenous cathepsin B-like but not cathepsin C-like proteinases. May have a protective role against undesired digestion of a stored blood meal by endogenous peptidases. The protein is Cystatin-1 of Ornithodoros moubata (Soft tick).